The sequence spans 92 residues: UPF0250 protein VP0718 (92 aa).

Belongs to the UPF0250 family.

The chain is UPF0250 protein VP0718 from Vibrio parahaemolyticus serotype O3:K6 (strain RIMD 2210633).